The primary structure comprises 119 residues: Large ribosomal subunit protein uL24 (119 aa).

Belongs to the universal ribosomal protein uL24 family. In terms of assembly, part of the 50S ribosomal subunit.

One of two assembly initiator proteins, it binds directly to the 5'-end of the 23S rRNA, where it nucleates assembly of the 50S subunit. Functionally, one of the proteins that surrounds the polypeptide exit tunnel on the outside of the subunit. The polypeptide is Large ribosomal subunit protein uL24 (Clavibacter sepedonicus (Clavibacter michiganensis subsp. sepedonicus)).